A 694-amino-acid chain; its full sequence is MANKREFSLEKTRNIGIMAHIDAGKTTTTERILYYTGKIHKIGETHEGDSQMDWMEEEKERGITITSAATTAQWKDHRINIIDTPGHVDFTIEVERSLRVLDGAVTVLDAQSGVEPQTENVWRQAENYGVPRIVFVNKMDKIGANFDFSVKSLHERLNANAIAVQMPIGAEDQFEGVIDLFDMVADVYDEDKLGAKWETIPVPDEYKEEAESRREEMIEEIAEVDDDIMEKFLGGEEISNEELKAALRRATLDLKAFPVFAGSAFKNKGVQMMLDGVVDYLPSPLDVKPYIAHDKEGNEVELLADDNKPFAALAFKIATDPFVGRLTFIRVYTGSLKSGSYVLNASKNQRERVGRLLQMHANSRTEIPEVFSGDIAGAIGLKDTTTGDSLTDPAHPLILESLDIPAPVIQVSVEPKSKADRDKMDVALQKLTEEDPTFRAETNPETGETLISGMGELHLDIMVERMKREFNVEATIGEPQVAYRETFTVPTQAQGKFVRQSGGKGQYGDVWIEFTPNEGKGYEFEDAIVGGVVPREYIPSVDAGLQEAMKNGVLAGYPLIDVKAKLYDGSYHEVDSSEAAFKVAASLALKNAASKAGAVILEPIMKVQVIAPEEYLGDVMGSITARRGQMEGMEDRAGAKVINAMVPLSEMFGYATTLRSSTQGRGTFTMVMDHYSPCPKSIQAEIIKKRGGNA.

The tr-type G domain occupies 10–285 (EKTRNIGIMA…GVVDYLPSPL (276 aa)). GTP-binding positions include 19–26 (AHIDAGKT), 83–87 (DTPGH), and 137–140 (NKMD).

It belongs to the TRAFAC class translation factor GTPase superfamily. Classic translation factor GTPase family. EF-G/EF-2 subfamily.

The protein resides in the cytoplasm. In terms of biological role, catalyzes the GTP-dependent ribosomal translocation step during translation elongation. During this step, the ribosome changes from the pre-translocational (PRE) to the post-translocational (POST) state as the newly formed A-site-bound peptidyl-tRNA and P-site-bound deacylated tRNA move to the P and E sites, respectively. Catalyzes the coordinated movement of the two tRNA molecules, the mRNA and conformational changes in the ribosome. The chain is Elongation factor G from Lactobacillus delbrueckii subsp. bulgaricus (strain ATCC 11842 / DSM 20081 / BCRC 10696 / JCM 1002 / NBRC 13953 / NCIMB 11778 / NCTC 12712 / WDCM 00102 / Lb 14).